Here is a 395-residue protein sequence, read N- to C-terminus: Acetate kinase (395 aa).

N7 serves as a coordination point for Mg(2+). K14 contacts ATP. R85 is a binding site for substrate. Residue D142 is the Proton donor/acceptor of the active site. Residues 202-206 (HLGNG), 277-279 (DMR), and 325-329 (GIGEN) contribute to the ATP site. Mg(2+) is bound at residue E378.

The protein belongs to the acetokinase family. As to quaternary structure, homodimer. It depends on Mg(2+) as a cofactor. Mn(2+) is required as a cofactor.

Its subcellular location is the cytoplasm. It catalyses the reaction acetate + ATP = acetyl phosphate + ADP. Its pathway is metabolic intermediate biosynthesis; acetyl-CoA biosynthesis; acetyl-CoA from acetate: step 1/2. In terms of biological role, catalyzes the formation of acetyl phosphate from acetate and ATP. Can also catalyze the reverse reaction. This Deinococcus geothermalis (strain DSM 11300 / CIP 105573 / AG-3a) protein is Acetate kinase.